The primary structure comprises 363 residues: S-adenosylmethionine:tRNA ribosyltransferase-isomerase (363 aa).

It belongs to the QueA family. As to quaternary structure, monomer.

The protein localises to the cytoplasm. The catalysed reaction is 7-aminomethyl-7-carbaguanosine(34) in tRNA + S-adenosyl-L-methionine = epoxyqueuosine(34) in tRNA + adenine + L-methionine + 2 H(+). It participates in tRNA modification; tRNA-queuosine biosynthesis. Its function is as follows. Transfers and isomerizes the ribose moiety from AdoMet to the 7-aminomethyl group of 7-deazaguanine (preQ1-tRNA) to give epoxyqueuosine (oQ-tRNA). The sequence is that of S-adenosylmethionine:tRNA ribosyltransferase-isomerase from Synechococcus sp. (strain RCC307).